The following is a 310-amino-acid chain: Upstream stimulatory factor 1 (310 aa).

A compositionally biased stretch (polar residues) spans 1 to 17 (MKGQQKTAETEEGTVQI). Disordered stretches follow at residues 1 to 26 (MKGQ…ATGE) and 171 to 209 (QGGS…EVER). Over residues 194 to 209 (TTRDEKRRAQHNEVER) the composition is skewed to basic and acidic residues. The region spanning 199–254 (KRRAQHNEVERRRRDKINNWIVQLSKIIPDCSMESTKSGQSKGGILSKACDYIQEL) is the bHLH domain. Residues 271 to 292 (LQLDNDVLRQQVEDLKNKNLLL) are leucine-zipper. Residue lysine 306 forms a Glycyl lysine isopeptide (Lys-Gly) (interchain with G-Cter in SUMO2) linkage.

In terms of assembly, efficient DNA binding requires dimerization with another bHLH protein. Binds DNA as a homodimer or a heterodimer (USF1/USF2).

The protein resides in the nucleus. Functionally, transcription factor that binds to a symmetrical DNA sequence (E-boxes) (5'-CACGTG-3') that is found in a variety of viral and cellular promoters. Regulates the expression of the surfactant protein-A (SP-A) gene. This Oryctolagus cuniculus (Rabbit) protein is Upstream stimulatory factor 1 (USF1).